We begin with the raw amino-acid sequence, 248 residues long: Putative TrmH family tRNA/rRNA methyltransferase (248 aa).

S-adenosyl-L-methionine is bound by residues Gly-196, Ile-216, and Leu-225.

Belongs to the class IV-like SAM-binding methyltransferase superfamily. RNA methyltransferase TrmH family.

The polypeptide is Putative TrmH family tRNA/rRNA methyltransferase (Staphylococcus aureus (strain Mu50 / ATCC 700699)).